We begin with the raw amino-acid sequence, 742 residues long: Synaptic vesicle glycoprotein 2A (742 aa).

Residues 1 to 57 form an interaction with SYT1 region; that stretch reads MEEGFRDRAAFIRGAKDIAKEVKKHAAKKVVKGLDRVQDEYSRRSYSRFEEEEDDDD. Over 1–169 the chain is Cytoplasmic; the sequence is MEEGFRDRAA…GHGRFQWTLY (169 aa). Residues 40 to 49 are compositionally biased toward basic and acidic residues; it reads EYSRRSYSRF. A disordered region spans residues 40 to 145; that stretch reads EYSRRSYSRF…RGEAQRRKDR (106 aa). Phosphoserine is present on residues S80 and S81. Residue T84 is modified to Phosphothreonine. A compositionally biased stretch (gly residues) spans 122-137; that stretch reads VRGGLSDGEGPPGGRG. S127 carries the phosphoserine modification. A helical membrane pass occupies residues 170 to 190; it reads FVLGLALMADGVEVFVVGFVL. Residues 191–205 are Extracellular-facing; that stretch reads PSAEKDMCLSDSNKG. Residues 206–226 form a helical membrane-spanning segment; it reads MLGLIVYLGMMVGAFLWGGLA. Over 227–233 the chain is Cytoplasmic; the sequence is DRLGRRQ. The helical transmembrane segment at 234–254 threads the bilayer; the sequence is CLLISLSVNSVFAFFSSFVQG. The Extracellular portion of the chain corresponds to 255–262; the sequence is YGTFLFCR. The chain crosses the membrane as a helical span at residues 263–283; it reads LLSGVGIGGSIPIVFSYFSEF. The Cytoplasmic portion of the chain corresponds to 284–294; that stretch reads LAQEKRGEHLS. The helical transmembrane segment at 295 to 315 threads the bilayer; it reads WLCMFWMIGGVYAAAMAWAII. Residues 316-334 lie on the Extracellular side of the membrane; sequence PHYGWSFQMGSAYQFHSWR. Residues 335–355 traverse the membrane as a helical segment; sequence VFVLVCAFPSVFAIGALTTQP. Residues 356-447 lie on the Cytoplasmic side of the membrane; sequence ESPRFFLENG…CFSPEYRRIT (92 aa). Phosphoserine is present on S393. Residues 448-468 form a helical membrane-spanning segment; sequence LMMMGVWFTMSFSYYGLTVWF. The Extracellular portion of the chain corresponds to 469–598; that stretch reads PDMIRHLQAV…GTGEGAYMVY (130 aa). A Phosphotyrosine modification is found at Y480. N-linked (GlcNAc...) asparagine glycans are attached at residues N498 and N548. A glycan (N-linked (GlcNAc...) asparagine; alternate) is linked at N573. A glycan (N-linked (HexNAc...) asparagine; alternate) is linked at N573. A helical membrane pass occupies residues 599–619; the sequence is FVSFLGTLAVLPGNIVSALLM. Residues 620–626 lie on the Cytoplasmic side of the membrane; that stretch reads DKIGRLR. The chain crosses the membrane as a helical span at residues 627 to 647; that stretch reads MLAGSSVLSCVSCFFLSFGNS. Residues 648–651 lie on the Extracellular side of the membrane; it reads ESAM. Residues 652–672 form a helical membrane-spanning segment; the sequence is IALLCLFGGVSIASWNALDVL. At 673–685 the chain is on the cytoplasmic side; the sequence is TVELYPSDKRTTA. The chain crosses the membrane as a helical span at residues 686–708; that stretch reads FGFLNALCKLAAVLGISIFTSFV. Residues 709-712 lie on the Extracellular side of the membrane; the sequence is GITK. The chain crosses the membrane as a helical span at residues 713 to 731; the sequence is AAPILFASAALALGSSLAL. At 732-742 the chain is on the cytoplasmic side; that stretch reads KLPETRGQVLQ.

This sequence belongs to the major facilitator superfamily. Interacts with SYT1/synaptotagmin-1 in a calcium-dependent manner. Binds the adapter protein complex AP-2. In terms of assembly, (Microbial infection) Interacts with C.botulinum neurotoxin type A1 and type A2 (BoNT/A, botA). Interaction is improved by glycosylation of SV2. As to quaternary structure, (Microbial infection) Copurifies with C.botulinum neurotoxin type B (BoNT/B, botB) and synaptotagmin 1 (SYT1). Interaction does not require glycosylation of SV2 or SYT1 proteins. Another group finds only copurification with SYT1 and SYT2. (Microbial infection) Interacts with C.botulinum neurotoxin type E (BoNT/E). Interaction requires glycosylation of SV2 proteins. In terms of assembly, (Microbial infection) Copurifies with C.botulinum neurotoxin type F (BoNT/F) and synaptotagmin 1 (SYT2). Another group finds only copurification with BoNT/F. Interaction requires SV2 glycosylation. In terms of processing, phosphorylation by CK1 of the N-terminal cytoplasmic domain regulates interaction with SYT1. N-glycosylated, on at least 3 residues. In terms of tissue distribution, widely expressed throughout the brain (at protein level). Expressed by neural and endocrine cells of brain and spinal cord.

It is found in the presynapse. The protein resides in the cytoplasmic vesicle. Its subcellular location is the secretory vesicle. The protein localises to the synaptic vesicle membrane. Plays a role in the control of regulated secretion in neural and endocrine cells, enhancing selectively low-frequency neurotransmission. Positively regulates vesicle fusion by maintaining the readily releasable pool of secretory vesicles. In terms of biological role, (Microbial infection) Receptor for C.botulinum neurotoxin type A (BoNT/A, botA); the toxin binds via extracellular loop 4. Restores uptake of BoNT/A in mouse cells that are deleted for SV2 receptor. Glycosylation of Asn-573 is not essential for receptor activity, but enhances uptake. Also serves as a receptor for the closely related C.botulinum neurotoxin type A2; glycosylation is not essential but enhances the interaction. Its function is as follows. Possible receptor for C.botulinum neurotoxin type D (BoNT/D, botD); BoNT/D does not bind to extracellular loop 4 as do BoNT/A and BoNT/E, nor to loop 1 or loop 3. Another group does not find a convincing interaction with SV2. Functionally, (Microbial infection) Receptor for C.botulinum neurotoxin type E (BoNT/E); the toxin probably binds via extracellular loop 4 and requires glycosylation of Asn-573. Restores uptake of BoNT/E in mouse cells that are deleted for SV2 receptor. (Microbial infection) Receptor for C.botulinum neurotoxin type F (BoNT/F). Binding requires glycosylation of Asn-573. In Rattus norvegicus (Rat), this protein is Synaptic vesicle glycoprotein 2A (Sv2a).